A 289-amino-acid chain; its full sequence is Glyoxylate/succinic semialdehyde reductase 1 (289 aa).

Position 1 is an N-acetylmethionine (M1). Residues 4-18 (GFLG…MSMN) and T95 contribute to the NADP(+) site. K170 is an active-site residue. K238 lines the NADP(+) pocket.

Belongs to the HIBADH-related family. NP60 subfamily.

It localises to the cytoplasm. Its subcellular location is the cytosol. The catalysed reaction is glycolate + NADP(+) = glyoxylate + NADPH + H(+). The enzyme catalyses 4-hydroxybutanoate + NADP(+) = succinate semialdehyde + NADPH + H(+). The ratio of NADPH/NADP(+) may regulate enzymatic activity. In terms of biological role, catalyzes the NADPH-dependent reduction of glyoxylate to glycolate as well as succinic semialdehyde (SSA) to gamma-hydroxybutyrate in vitro. May function in redox homeostasis and play a role in oxidative stress tolerance by detoxifying glyoxylate and SSA generated in glycolate metabolism and GABA metabolism, respectively. The chain is Glyoxylate/succinic semialdehyde reductase 1 (GLYR1) from Arabidopsis thaliana (Mouse-ear cress).